Consider the following 387-residue polypeptide: Succinate--CoA ligase [ADP-forming] subunit beta (387 aa).

Positions 9-236 (RDLFEKYGVP…KAAADPLEAK (228 aa)) constitute an ATP-grasp domain. Residues K45, 52–54 (GRG), A94, and E99 contribute to the ATP site. Mg(2+) contacts are provided by N191 and D205. Substrate contacts are provided by residues N256 and 318–320 (GIT).

It belongs to the succinate/malate CoA ligase beta subunit family. In terms of assembly, heterotetramer of two alpha and two beta subunits. It depends on Mg(2+) as a cofactor.

The catalysed reaction is succinate + ATP + CoA = succinyl-CoA + ADP + phosphate. The enzyme catalyses GTP + succinate + CoA = succinyl-CoA + GDP + phosphate. The protein operates within carbohydrate metabolism; tricarboxylic acid cycle; succinate from succinyl-CoA (ligase route): step 1/1. Succinyl-CoA synthetase functions in the citric acid cycle (TCA), coupling the hydrolysis of succinyl-CoA to the synthesis of either ATP or GTP and thus represents the only step of substrate-level phosphorylation in the TCA. The beta subunit provides nucleotide specificity of the enzyme and binds the substrate succinate, while the binding sites for coenzyme A and phosphate are found in the alpha subunit. The polypeptide is Succinate--CoA ligase [ADP-forming] subunit beta (Leifsonia xyli subsp. xyli (strain CTCB07)).